The following is a 155-amino-acid chain: Large ribosomal subunit protein uL22c (155 aa).

It belongs to the universal ribosomal protein uL22 family. Part of the 50S ribosomal subunit.

It localises to the plastid. Its subcellular location is the chloroplast. Functionally, this protein binds specifically to 23S rRNA. In terms of biological role, the globular domain of the protein is located near the polypeptide exit tunnel on the outside of the subunit, while an extended beta-hairpin is found that lines the wall of the exit tunnel in the center of the 70S ribosome. The chain is Large ribosomal subunit protein uL22c (rpl22) from Solanum bulbocastanum (Wild potato).